Consider the following 224-residue polypeptide: Orotate phosphoribosyltransferase (224 aa).

Residues K26, 73-74 (YK), R100, K101, K104, H106, and 127-135 (EDVTTAGTS) each bind 5-phospho-alpha-D-ribose 1-diphosphate. Residues T131 and R160 each coordinate orotate.

The protein belongs to the purine/pyrimidine phosphoribosyltransferase family. PyrE subfamily. Homodimer. Requires Mg(2+) as cofactor.

It catalyses the reaction orotidine 5'-phosphate + diphosphate = orotate + 5-phospho-alpha-D-ribose 1-diphosphate. Its pathway is pyrimidine metabolism; UMP biosynthesis via de novo pathway; UMP from orotate: step 1/2. Its function is as follows. Catalyzes the transfer of a ribosyl phosphate group from 5-phosphoribose 1-diphosphate to orotate, leading to the formation of orotidine monophosphate (OMP). This Clostridium beijerinckii (strain ATCC 51743 / NCIMB 8052) (Clostridium acetobutylicum) protein is Orotate phosphoribosyltransferase.